Consider the following 70-residue polypeptide: Translational regulator CsrA (70 aa).

The protein belongs to the CsrA/RsmA family. As to quaternary structure, homodimer; the beta-strands of each monomer intercalate to form a hydrophobic core, while the alpha-helices form wings that extend away from the core.

Its subcellular location is the cytoplasm. In terms of biological role, a translational regulator that binds mRNA to regulate translation initiation and/or mRNA stability. Usually binds in the 5'-UTR at or near the Shine-Dalgarno sequence preventing ribosome-binding, thus repressing translation. Its main target seems to be the major flagellin gene, while its function is anatagonized by FliW. The polypeptide is Translational regulator CsrA (Clostridioides difficile (strain 630) (Peptoclostridium difficile)).